An 89-amino-acid chain; its full sequence is Dynein light chain LC6, flagellar outer arm (89 aa).

The protein belongs to the dynein light chain family. Consists of at least 3 heavy chains (alpha, beta and gamma), 2 intermediate chains and 8 light chains.

The protein localises to the cytoplasm. It is found in the cytoskeleton. The protein resides in the flagellum axoneme. The polypeptide is Dynein light chain LC6, flagellar outer arm (Heliocidaris crassispina (Sea urchin)).